Consider the following 434-residue polypeptide: Putative nuclease OPG089 (434 aa).

Residues Asp33, Asp74, Glu168, Asp170, Asp196, and Asp198 each contribute to the Mg(2+) site.

The protein belongs to the XPG/RAD2 endonuclease family. FEN1 subfamily. Mg(2+) serves as cofactor.

Its subcellular location is the virion. Functionally, putative nuclease that seems to be required for double-strand break repair, homologous recombination, and production of full-length viral genomic DNA. The sequence is that of Putative nuclease OPG089 (OPG089) from Vaccinia virus (strain Western Reserve) (VACV).